The chain runs to 174 residues: ATP-dependent protease subunit HslV (174 aa).

The active site involves T2. Residues G157, C160, and T163 each contribute to the Na(+) site.

The protein belongs to the peptidase T1B family. HslV subfamily. As to quaternary structure, a double ring-shaped homohexamer of HslV is capped on each side by a ring-shaped HslU homohexamer. The assembly of the HslU/HslV complex is dependent on binding of ATP.

The protein resides in the cytoplasm. The enzyme catalyses ATP-dependent cleavage of peptide bonds with broad specificity.. Its activity is regulated as follows. Allosterically activated by HslU binding. Functionally, protease subunit of a proteasome-like degradation complex believed to be a general protein degrading machinery. The sequence is that of ATP-dependent protease subunit HslV from Shewanella pealeana (strain ATCC 700345 / ANG-SQ1).